The primary structure comprises 97 residues: Phosphoribosyl-ATP pyrophosphatase (97 aa).

Belongs to the PRA-PH family.

The protein resides in the cytoplasm. It carries out the reaction 1-(5-phospho-beta-D-ribosyl)-ATP + H2O = 1-(5-phospho-beta-D-ribosyl)-5'-AMP + diphosphate + H(+). Its pathway is amino-acid biosynthesis; L-histidine biosynthesis; L-histidine from 5-phospho-alpha-D-ribose 1-diphosphate: step 2/9. In Methanoculleus marisnigri (strain ATCC 35101 / DSM 1498 / JR1), this protein is Phosphoribosyl-ATP pyrophosphatase.